The chain runs to 238 residues: ATP synthase subunit a (238 aa).

5 helical membrane-spanning segments follow: residues 18 to 38 (LTLLAVCIVTIAVIFAFVFWA), 76 to 96 (YSLLLFTIFLFVAVANNLGLF), 114 to 134 (NLAFDLALSLFITLMVHIEGV), 166 to 186 (SLAIRLFGNIFAGEVVTGLIV), and 193 to 213 (VYWWPIAFLVNMAWTAFSVFI).

It belongs to the ATPase A chain family. F-type ATPases have 2 components, CF(1) - the catalytic core - and CF(0) - the membrane proton channel. CF(1) has five subunits: alpha(3), beta(3), gamma(1), delta(1), epsilon(1). CF(0) has three main subunits: a(1), b(2) and c(9-12). The alpha and beta chains form an alternating ring which encloses part of the gamma chain. CF(1) is attached to CF(0) by a central stalk formed by the gamma and epsilon chains, while a peripheral stalk is formed by the delta and b chains.

The protein resides in the cell membrane. Key component of the proton channel; it plays a direct role in the translocation of protons across the membrane. This is ATP synthase subunit a from Streptococcus pyogenes serotype M49 (strain NZ131).